Consider the following 582-residue polypeptide: Proline--tRNA ligase (582 aa).

It belongs to the class-II aminoacyl-tRNA synthetase family. ProS type 1 subfamily. Homodimer.

It is found in the cytoplasm. It catalyses the reaction tRNA(Pro) + L-proline + ATP = L-prolyl-tRNA(Pro) + AMP + diphosphate. Functionally, catalyzes the attachment of proline to tRNA(Pro) in a two-step reaction: proline is first activated by ATP to form Pro-AMP and then transferred to the acceptor end of tRNA(Pro). As ProRS can inadvertently accommodate and process non-cognate amino acids such as alanine and cysteine, to avoid such errors it has two additional distinct editing activities against alanine. One activity is designated as 'pretransfer' editing and involves the tRNA(Pro)-independent hydrolysis of activated Ala-AMP. The other activity is designated 'posttransfer' editing and involves deacylation of mischarged Ala-tRNA(Pro). The misacylated Cys-tRNA(Pro) is not edited by ProRS. This chain is Proline--tRNA ligase, found in Mycobacterium bovis (strain ATCC BAA-935 / AF2122/97).